Consider the following 374-residue polypeptide: Chaperone protein DnaJ (374 aa).

The J domain maps to 5–71 (DLYAILGVCR…QKRASYDRFG (67 aa)). The segment at 132–210 (GVEKQIRIAT…CQGTGRVKDT (79 aa)) adopts a CR-type zinc-finger fold. Zn(2+) is bound by residues cysteine 145, cysteine 148, cysteine 162, cysteine 165, cysteine 184, cysteine 187, cysteine 198, and cysteine 201. CXXCXGXG motif repeat units lie at residues 145 to 152 (CGECHGSG), 162 to 169 (CPTCNGAG), 184 to 191 (CPTCHGRG), and 198 to 205 (CNKCQGTG).

Belongs to the DnaJ family. In terms of assembly, homodimer. It depends on Zn(2+) as a cofactor.

It is found in the cytoplasm. In terms of biological role, participates actively in the response to hyperosmotic and heat shock by preventing the aggregation of stress-denatured proteins and by disaggregating proteins, also in an autonomous, DnaK-independent fashion. Unfolded proteins bind initially to DnaJ; upon interaction with the DnaJ-bound protein, DnaK hydrolyzes its bound ATP, resulting in the formation of a stable complex. GrpE releases ADP from DnaK; ATP binding to DnaK triggers the release of the substrate protein, thus completing the reaction cycle. Several rounds of ATP-dependent interactions between DnaJ, DnaK and GrpE are required for fully efficient folding. Also involved, together with DnaK and GrpE, in the DNA replication of plasmids through activation of initiation proteins. In Dichelobacter nodosus (strain VCS1703A), this protein is Chaperone protein DnaJ.